The chain runs to 113 residues: Ribulose bisphosphate carboxylase small subunit (113 aa).

It belongs to the RuBisCO small chain family. In terms of assembly, heterohexadecamer of 8 large and 8 small subunits. Forms a CsoS2-CsoS1-RuBisCO complex.

The protein resides in the carboxysome. RuBisCO catalyzes two reactions: the carboxylation of D-ribulose 1,5-bisphosphate, the primary event in carbon dioxide fixation, as well as the oxidative fragmentation of the pentose substrate in the photorespiration process. Both reactions occur simultaneously and in competition at the same active site. Although the small subunit is not catalytic it is essential for maximal activity. This Prochlorococcus marinus (strain MIT 9313) protein is Ribulose bisphosphate carboxylase small subunit.